The primary structure comprises 744 residues: Deleted in azoospermia protein 1 (744 aa).

The segment covering M1–N10 has biased composition (polar residues). Residues M1 to S27 are disordered. Over residues S11–S27 the composition is skewed to low complexity. The region spanning N40–R115 is the RRM 1 domain. Polar residues predominate over residues Q163–N175. Positions Q163–S192 are disordered. The span at S176–S192 shows a compositional bias: low complexity. An RRM 2 domain is found at N205 to R280. A compositionally biased stretch (polar residues) spans Q328 to N340. Residues Q328 to S357 are disordered. Residues S341–S357 show a composition bias toward low complexity. Residues N370 to R445 form the RRM 3 domain. DAZ domains lie at A497 to Q520, E521 to Q544, P545 to Q568, A569 to Q592, P593 to Q616, A617 to Q640, A641 to Q664, A665 to Q688, and A689 to Q712.

The protein belongs to the RRM DAZ family. In terms of assembly, forms a heterodimer with BOLL and DAZL. Interacts with PUM2, DAZAP1, DAZAP2, DZIP1 and DZIP3. In terms of tissue distribution, testis-specific. Expression restricted to premeiotic germ cells, particularly in spermatogonia (at protein level).

Its subcellular location is the cytoplasm. The protein resides in the nucleus. Its function is as follows. RNA-binding protein that plays an essential role in spermatogenesis. May act by binding to the 3'-UTR of mRNAs and regulating their translation. Promotes germ-cell progression to meiosis and formation of haploid germ cells. In Homo sapiens (Human), this protein is Deleted in azoospermia protein 1 (DAZ1).